The following is a 365-amino-acid chain: Probable dual-specificity RNA methyltransferase RlmN (365 aa).

Glu-111 (proton acceptor) is an active-site residue. The region spanning Ala-117–Asp-351 is the Radical SAM core domain. Cys-124 and Cys-356 are joined by a disulfide. Cys-131, Cys-135, and Cys-138 together coordinate [4Fe-4S] cluster. S-adenosyl-L-methionine-binding positions include Gly-182–Glu-183, Ser-214, Ser-237–His-239, and Asn-313. The active-site S-methylcysteine intermediate is Cys-356.

The protein belongs to the radical SAM superfamily. RlmN family. [4Fe-4S] cluster serves as cofactor.

It localises to the cytoplasm. It catalyses the reaction adenosine(2503) in 23S rRNA + 2 reduced [2Fe-2S]-[ferredoxin] + 2 S-adenosyl-L-methionine = 2-methyladenosine(2503) in 23S rRNA + 5'-deoxyadenosine + L-methionine + 2 oxidized [2Fe-2S]-[ferredoxin] + S-adenosyl-L-homocysteine. The catalysed reaction is adenosine(37) in tRNA + 2 reduced [2Fe-2S]-[ferredoxin] + 2 S-adenosyl-L-methionine = 2-methyladenosine(37) in tRNA + 5'-deoxyadenosine + L-methionine + 2 oxidized [2Fe-2S]-[ferredoxin] + S-adenosyl-L-homocysteine. Specifically methylates position 2 of adenine 2503 in 23S rRNA and position 2 of adenine 37 in tRNAs. The polypeptide is Probable dual-specificity RNA methyltransferase RlmN (Cytophaga hutchinsonii (strain ATCC 33406 / DSM 1761 / CIP 103989 / NBRC 15051 / NCIMB 9469 / D465)).